Here is a 275-residue protein sequence, read N- to C-terminus: Beta-lactamase OXA-15 (275 aa).

Residues 1 to 21 form the signal peptide; it reads MAIRIFAILFSIFSLATFAHA. Ser72 (acyl-ester intermediate) is an active-site residue. Lys75 bears the N6-carboxylysine mark. Residue 210 to 212 participates in substrate binding; sequence KTG.

Belongs to the class-D beta-lactamase family.

It carries out the reaction a beta-lactam + H2O = a substituted beta-amino acid. Hydrolyzes oxacillin, first-generation cephalosporins and ceftazidime. Does not hydrolyze cefotaxime or carbapenems. In Pseudomonas aeruginosa, this protein is Beta-lactamase OXA-15 (bla).